We begin with the raw amino-acid sequence, 1331 residues long: MTADELVFFVNGKKVVEKNADPETTLLVYLRRKLGLCGTKLGCGEGGCGACTVMISKYDRLQNKIVHFSVNACLAPICSLHHVAVTTVEGIGNTQKLHPVQERIARSHGSQCGFCTPGIVMSMYTLLRNQPEPTVEEIENAFQGNLCRCTGYRPILQGFRTFAKDGGCCGGSGNNPNCCMNQTKDQTVSLSPSLFNPEDFKPLDPTQEPIFPPELLRLKDTPQKKLRFEGERVTWIQASTMEELLDLKAQHPDAKLVVGNTEIGIEMKFKNMLFPLIVCPAWIPELNSVVHGPEGISFGASCPLSLVESVLAEEIAKLPEQKTEVFRGVMEQLRWFAGKQVKSVASIGGNIITASPISDLNPVFMASGAKLTLVSRGTRRTVRMDHTFFPGYRKTLLRPEEILLSIEIPYSKEGEFFSAFKQASRREDDIAKVTSGMRVLFKPGTIEVQELSLCFGGMADRTISALKTTPKQLSKSWNEELLQSVCAGLAEELQLAPDAPGGMVEFRRTLTLSFFFKFYLTVLQKLGRADLEDMCGKLDPTFASATLLFQKDPPANVQLFQEVPKDQSEEDMVGRPLPHLAANMQASGEAVYCDDIPRYENELSLRLVTSTRAHAKITSIDTSEAKKVPGFVCFLTAEDVPNSNATGLFNDETVFAKDEVTCVGHIIGAVVADTPEHAQRAARGVKITYEDLPAIITIQDAINNNSFYGSEIKIEKGDLKKGFSEADNVVSGELYIGGQEHFYLETNCTIAVPKGEAGEMELFVSTQNTMKTQSFVAKMLGVPDNRIVVRVKRMGGGFGGKETRSTVVSTALALAAHKTGRPVRCMLDRDEDMLITGGRHPFLAKYKVGFMKTGTVVALEVAHFSNGGNTEDLSRSIMERALFHMDNAYKIPNIRGTGRICKTNLPSNTAFRGFGGPQGMLIAEYWMSEVAITCGLPAEEVRRKNMYKEGDLTHFNQKLEGFTLPRCWDECIASSQYLARKREVEKFNRENCWKKRGLCIIPTKFGISFTLPFLNQGGALVHVYTDGSVLLTHGGTEMGQGLHTKMVQVASRALKIPTSKIHISETSTNTVPNTSPTAASASADLNGQGVYEACQTILKRLEPFKKKKPTGPWEAWVMDAYTSAVSLSATGFYKTPNLGYSFETNSGNPFHYFSYGVACSEVEIDCLTGDHKNLRTDIVMDVGSSLNPAIDIGQVEGAFVQGLGLFTMEELHYSPEGSLHTRGPSTYKIPAFGSIPIEFRVSLLRDCPNKRAIYASKAVGEPPLFLASSIFFAIKDAIRAARAQHGDNAKQLFQLDSPATPEKIRNACVDQFTTLCVTGVPENCKSWSVRI.

The 88-residue stretch at 4–91 (DELVFFVNGK…HVAVTTVEGI (88 aa)) folds into the 2Fe-2S ferredoxin-type domain. Cys-43, Cys-48, Cys-51, Cys-73, Cys-112, Cys-115, Cys-147, and Cys-149 together coordinate [2Fe-2S] cluster. The 186-residue stretch at 228 to 413 (FEGERVTWIQ…LSIEIPYSKE (186 aa)) folds into the FAD-binding PCMH-type domain. FAD contacts are provided by residues 256-263 (LVVGNTEI), Phe-336, 346-350 (SIGGN), Asp-359, Leu-403, and Lys-421. Cys-535 and Cys-992 form a disulfide bridge. The Mo-molybdopterin site is built by Gln-767 and Phe-798. Substrate is bound by residues Glu-802 and Arg-880. A Mo-molybdopterin-binding site is contributed by Arg-912. Substrate-binding residues include Phe-914 and Thr-1010. Ala-1079 lines the Mo-molybdopterin pocket. Catalysis depends on Glu-1261, which acts as the Proton acceptor.

This sequence belongs to the xanthine dehydrogenase family. Homodimer. Interacts with BTN1A1. [2Fe-2S] cluster is required as a cofactor. The cofactor is FAD. Mo-molybdopterin serves as cofactor. In terms of processing, subject to partial proteolysis; this alters the enzyme from the dehydrogenase form (D) to the oxidase form (O). Contains sulfhydryl groups that are easily oxidized (in vitro); this alters the enzyme from the dehydrogenase form (D) to the oxidase form (O).

The protein resides in the peroxisome. It localises to the cytoplasm. The protein localises to the secreted. It carries out the reaction xanthine + NAD(+) + H2O = urate + NADH + H(+). The enzyme catalyses hypoxanthine + NAD(+) + H2O = xanthine + NADH + H(+). The catalysed reaction is xanthine + O2 + H2O = urate + H2O2. Can be converted from the dehydrogenase form (D) to the oxidase form (O) irreversibly by proteolysis or reversibly through the oxidation of sulfhydryl groups. Its function is as follows. Key enzyme in purine degradation. Catalyzes the oxidation of hypoxanthine to xanthine. Catalyzes the oxidation of xanthine to uric acid. Contributes to the generation of reactive oxygen species. The chain is Xanthine dehydrogenase/oxidase (Xdh) from Rattus norvegicus (Rat).